Reading from the N-terminus, the 615-residue chain is Isocitrate dehydrogenase kinase/phosphatase (615 aa).

ATP contacts are provided by residues 325–331 (APGIKGM) and Lys346. The active site involves Asp381.

It belongs to the AceK family.

It localises to the cytoplasm. It carries out the reaction L-seryl-[isocitrate dehydrogenase] + ATP = O-phospho-L-seryl-[isocitrate dehydrogenase] + ADP + H(+). In terms of biological role, bifunctional enzyme which can phosphorylate or dephosphorylate isocitrate dehydrogenase (IDH) on a specific serine residue. This is a regulatory mechanism which enables bacteria to bypass the Krebs cycle via the glyoxylate shunt in response to the source of carbon. When bacteria are grown on glucose, IDH is fully active and unphosphorylated, but when grown on acetate or ethanol, the activity of IDH declines drastically concomitant with its phosphorylation. The protein is Isocitrate dehydrogenase kinase/phosphatase of Albidiferax ferrireducens (strain ATCC BAA-621 / DSM 15236 / T118) (Rhodoferax ferrireducens).